A 137-amino-acid chain; its full sequence is Large ribosomal subunit protein uL16 (137 aa).

Positions Met1 to Val20 are disordered. A compositionally biased stretch (basic residues) spans Arg7–Asn17.

The protein belongs to the universal ribosomal protein uL16 family. In terms of assembly, part of the 50S ribosomal subunit.

Its function is as follows. Binds 23S rRNA and is also seen to make contacts with the A and possibly P site tRNAs. In Coxiella burnetii (strain CbuK_Q154) (Coxiella burnetii (strain Q154)), this protein is Large ribosomal subunit protein uL16.